Reading from the N-terminus, the 461-residue chain is tRNA (guanine(10)-N(2))-methyltransferase TRMT11 (461 aa).

Belongs to the class I-like SAM-binding methyltransferase superfamily. TRM11 methyltransferase family. As to quaternary structure, part of the heterodimeric TRMT11-TRM112 methyltransferase complex; this complex forms an active tRNA methyltransferase, where TRMT112 acts as an activator of the catalytic subunit TRMT11.

Its subcellular location is the cytoplasm. The enzyme catalyses guanosine(10) in tRNA + S-adenosyl-L-methionine = N(2)-methylguanosine(10) in tRNA + S-adenosyl-L-homocysteine + H(+). Functionally, catalytic subunit of the TRMT11-TRM112 methyltransferase complex, that specifically mediates the S-adenosyl-L-methionine-dependent N(2)-methylation of guanosine nucleotide at position 10 (m2G10) in tRNAs. This is one of the major tRNA (guanine-N(2))-methyltransferases. This Gallus gallus (Chicken) protein is tRNA (guanine(10)-N(2))-methyltransferase TRMT11.